A 420-amino-acid polypeptide reads, in one-letter code: rRNA methyltransferase 3, mitochondrial (420 aa).

The transit peptide at 1–40 directs the protein to the mitochondrion; sequence MAALVRPARFVVRPLLQVVQAWDLDARRWVRALRRSPVKV. Residues 49 to 88 form a disordered region; that stretch reads EQKRAPGKQPRKAPSEASAQEQREKQPLEESASRAPSTWE. The span at 69–80 shows a compositional bias: basic and acidic residues; that stretch reads EQREKQPLEESA. Residues glycine 356, isoleucine 380, and leucine 389 each coordinate S-adenosyl-L-methionine.

Belongs to the class IV-like SAM-binding methyltransferase superfamily. RNA methyltransferase TrmH family. Expressed at same level in normal liver and hepatocarcinoma.

Its subcellular location is the mitochondrion. It carries out the reaction guanosine(1370) in 16S rRNA + S-adenosyl-L-methionine = 2'-O-methylguanosine(1370) in 16S rRNA + S-adenosyl-L-homocysteine + H(+). Its function is as follows. S-adenosyl-L-methionine-dependent 2'-O-ribose methyltransferase that catalyzes the formation of 2'-O-methylguanosine at position 1370 (Gm1370) in the 16S mitochondrial large subunit ribosomal RNA (mtLSU rRNA), a conserved modification in the peptidyl transferase domain of the mtLSU rRNA. Also required for formation of 2'-O-methyluridine at position 1369 (Um1369) mediated by MRM2. The sequence is that of rRNA methyltransferase 3, mitochondrial from Homo sapiens (Human).